We begin with the raw amino-acid sequence, 294 residues long: Shikimate dehydrogenase (NADP(+)) (294 aa).

Shikimate-binding positions include 22-24 (SLS) and serine 69. Lysine 73 functions as the Proton acceptor in the catalytic mechanism. Residues asparagine 94 and aspartate 111 each coordinate shikimate. NADP(+) is bound by residues 135 to 139 (GAGGA) and leucine 236. Residue tyrosine 238 participates in shikimate binding. Glycine 260 is a binding site for NADP(+).

The protein belongs to the shikimate dehydrogenase family. In terms of assembly, homodimer.

The enzyme catalyses shikimate + NADP(+) = 3-dehydroshikimate + NADPH + H(+). Its pathway is metabolic intermediate biosynthesis; chorismate biosynthesis; chorismate from D-erythrose 4-phosphate and phosphoenolpyruvate: step 4/7. In terms of biological role, involved in the biosynthesis of the chorismate, which leads to the biosynthesis of aromatic amino acids. Catalyzes the reversible NADPH linked reduction of 3-dehydroshikimate (DHSA) to yield shikimate (SA). The protein is Shikimate dehydrogenase (NADP(+)) of Streptococcus equi subsp. zooepidemicus (strain MGCS10565).